Reading from the N-terminus, the 940-residue chain is Isoleucine--tRNA ligase (940 aa).

The short motif at P58 to H68 is the 'HIGH' region element. L-isoleucyl-5'-AMP is bound at residue E563. Residues K604–S608 carry the 'KMSKS' region motif. Residue K607 participates in ATP binding. Zn(2+)-binding residues include C902, C905, C922, and C925.

Belongs to the class-I aminoacyl-tRNA synthetase family. IleS type 1 subfamily. In terms of assembly, monomer. It depends on Zn(2+) as a cofactor.

The protein localises to the cytoplasm. It carries out the reaction tRNA(Ile) + L-isoleucine + ATP = L-isoleucyl-tRNA(Ile) + AMP + diphosphate. Catalyzes the attachment of isoleucine to tRNA(Ile). As IleRS can inadvertently accommodate and process structurally similar amino acids such as valine, to avoid such errors it has two additional distinct tRNA(Ile)-dependent editing activities. One activity is designated as 'pretransfer' editing and involves the hydrolysis of activated Val-AMP. The other activity is designated 'posttransfer' editing and involves deacylation of mischarged Val-tRNA(Ile). This Marinomonas sp. (strain MWYL1) protein is Isoleucine--tRNA ligase.